The chain runs to 321 residues: Protein BIG GRAIN 1-like E (321 aa).

Positions 134–217 (AGSKKNKSKS…PPPYLNTPTK (84 aa)) are disordered. The segment covering 135 to 147 (GSKKNKSKSKSKT) has biased composition (basic residues). Over residues 172–206 (ISHFFSSSRSTSTTTTTTASSSSKSLISSSSSGFR) the composition is skewed to low complexity.

This sequence belongs to the BIG GRAIN 1 (BG1) plant protein family.

Its subcellular location is the cell membrane. In terms of biological role, involved in auxin transport. Regulator of the auxin signaling pathway. This chain is Protein BIG GRAIN 1-like E, found in Arabidopsis thaliana (Mouse-ear cress).